The chain runs to 281 residues: Putative rRNA methyltransferase YqxC (281 aa).

In terms of domain architecture, S4 RNA-binding spans 6 to 67; the sequence is ERLDVLLVER…NPLRYVSRGG (62 aa).

Belongs to the TlyA family.

In Bacillus subtilis (strain 168), this protein is Putative rRNA methyltransferase YqxC (yqxC).